The following is a 106-amino-acid chain: Iron-sulfur cluster assembly protein CyaY (106 aa).

Belongs to the frataxin family.

In terms of biological role, involved in iron-sulfur (Fe-S) cluster assembly. May act as a regulator of Fe-S biogenesis. The protein is Iron-sulfur cluster assembly protein CyaY of Pectobacterium atrosepticum (strain SCRI 1043 / ATCC BAA-672) (Erwinia carotovora subsp. atroseptica).